The primary structure comprises 356 residues: Ferredoxin--NADP reductase (356 aa).

8 residues coordinate FAD: threonine 25, glutamate 44, glutamine 52, tyrosine 57, valine 97, phenylalanine 132, aspartate 298, and serine 339.

It belongs to the ferredoxin--NADP reductase type 2 family. In terms of assembly, homodimer. Requires FAD as cofactor.

The catalysed reaction is 2 reduced [2Fe-2S]-[ferredoxin] + NADP(+) + H(+) = 2 oxidized [2Fe-2S]-[ferredoxin] + NADPH. The polypeptide is Ferredoxin--NADP reductase (Chlorobaculum parvum (strain DSM 263 / NCIMB 8327) (Chlorobium vibrioforme subsp. thiosulfatophilum)).